Reading from the N-terminus, the 225-residue chain is ATP synthase F(0) complex subunit a (225 aa).

Helical transmembrane passes span 10-30 (PSLLGISLLMPALLMTTILLL), 69-89 (LILISLLILLSLTNLLGLLPY), 96-116 (QLSMNMAIALPLWLVTVLIGL), 135-155 (LLIPILILIETISLLIRPIAL), 168-188 (LLIQLISIATLNLWFMMPPLS), and 194-214 (VLILLLLLEFAVAMIQAYVFV).

Belongs to the ATPase A chain family. Component of the ATP synthase complex composed at least of ATP5F1A/subunit alpha, ATP5F1B/subunit beta, ATP5MC1/subunit c (homooctomer), MT-ATP6/subunit a, MT-ATP8/subunit 8, ATP5ME/subunit e, ATP5MF/subunit f, ATP5MG/subunit g, ATP5MK/subunit k, ATP5MJ/subunit j, ATP5F1C/subunit gamma, ATP5F1D/subunit delta, ATP5F1E/subunit epsilon, ATP5PF/subunit F6, ATP5PB/subunit b, ATP5PD/subunit d, ATP5PO/subunit OSCP. ATP synthase complex consists of a soluble F(1) head domain (subunits alpha(3) and beta(3)) - the catalytic core - and a membrane F(0) domain - the membrane proton channel (subunits c, a, 8, e, f, g, k and j). These two domains are linked by a central stalk (subunits gamma, delta, and epsilon) rotating inside the F1 region and a stationary peripheral stalk (subunits F6, b, d, and OSCP). Interacts with DNAJC30; interaction is direct.

Its subcellular location is the mitochondrion inner membrane. It catalyses the reaction H(+)(in) = H(+)(out). Functionally, subunit a, of the mitochondrial membrane ATP synthase complex (F(1)F(0) ATP synthase or Complex V) that produces ATP from ADP in the presence of a proton gradient across the membrane which is generated by electron transport complexes of the respiratory chain. ATP synthase complex consist of a soluble F(1) head domain - the catalytic core - and a membrane F(1) domain - the membrane proton channel. These two domains are linked by a central stalk rotating inside the F(1) region and a stationary peripheral stalk. During catalysis, ATP synthesis in the catalytic domain of F(1) is coupled via a rotary mechanism of the central stalk subunits to proton translocation. With the subunit c (ATP5MC1), forms the proton-conducting channel in the F(0) domain, that contains two crucial half-channels (inlet and outlet) that facilitate proton movement from the mitochondrial intermembrane space (IMS) into the matrix. Protons are taken up via the inlet half-channel and released through the outlet half-channel, following a Grotthuss mechanism. In Alligator mississippiensis (American alligator), this protein is ATP synthase F(0) complex subunit a.